We begin with the raw amino-acid sequence, 303 residues long: Proteasome subunit beta (303 aa).

The propeptide at 1–67 (MTWQFPDRLS…SGGTGQLPHG (67 aa)) is removed in mature form; by autocatalysis. Catalysis depends on threonine 68, which acts as the Nucleophile.

It belongs to the peptidase T1B family. The 20S proteasome core is composed of 14 alpha and 14 beta subunits that assemble into four stacked heptameric rings, resulting in a barrel-shaped structure. The two inner rings, each composed of seven catalytic beta subunits, are sandwiched by two outer rings, each composed of seven alpha subunits. The catalytic chamber with the active sites is on the inside of the barrel. Has a gated structure, the ends of the cylinder being occluded by the N-termini of the alpha-subunits. Is capped by the proteasome-associated ATPase, ARC.

It is found in the cytoplasm. It catalyses the reaction Cleavage of peptide bonds with very broad specificity.. Its pathway is protein degradation; proteasomal Pup-dependent pathway. The formation of the proteasomal ATPase ARC-20S proteasome complex, likely via the docking of the C-termini of ARC into the intersubunit pockets in the alpha-rings, may trigger opening of the gate for substrate entry. Interconversion between the open-gate and close-gate conformations leads to a dynamic regulation of the 20S proteasome proteolysis activity. Its function is as follows. Component of the proteasome core, a large protease complex with broad specificity involved in protein degradation. This chain is Proteasome subunit beta, found in Mycobacterium avium (strain 104).